The sequence spans 308 residues: Aspartate carbamoyltransferase catalytic subunit (308 aa).

The carbamoyl phosphate site is built by Arg59 and Thr60. Lys87 serves as a coordination point for L-aspartate. Positions 109, 137, and 140 each coordinate carbamoyl phosphate. L-aspartate contacts are provided by Arg173 and Arg224. Carbamoyl phosphate is bound by residues Gly267 and Pro268.

This sequence belongs to the aspartate/ornithine carbamoyltransferase superfamily. ATCase family. Heterododecamer (2C3:3R2) of six catalytic PyrB chains organized as two trimers (C3), and six regulatory PyrI chains organized as three dimers (R2).

The enzyme catalyses carbamoyl phosphate + L-aspartate = N-carbamoyl-L-aspartate + phosphate + H(+). It participates in pyrimidine metabolism; UMP biosynthesis via de novo pathway; (S)-dihydroorotate from bicarbonate: step 2/3. Catalyzes the condensation of carbamoyl phosphate and aspartate to form carbamoyl aspartate and inorganic phosphate, the committed step in the de novo pyrimidine nucleotide biosynthesis pathway. The sequence is that of Aspartate carbamoyltransferase catalytic subunit from Helicobacter acinonychis (strain Sheeba).